The following is an 810-amino-acid chain: DNA gyrase subunit A (810 aa).

Residues 36–502 (LPDVRDGLKP…EVLKTSMSDL (467 aa)) form the Topo IIA-type catalytic domain. The O-(5'-phospho-DNA)-tyrosine intermediate role is filled by Tyr-124. The GyrA-box motif lies at 529–535 (QGIGGKG).

It belongs to the type II topoisomerase GyrA/ParC subunit family. As to quaternary structure, heterotetramer, composed of two GyrA and two GyrB chains. In the heterotetramer, GyrA contains the active site tyrosine that forms a transient covalent intermediate with DNA, while GyrB binds cofactors and catalyzes ATP hydrolysis.

It is found in the cytoplasm. It carries out the reaction ATP-dependent breakage, passage and rejoining of double-stranded DNA.. A type II topoisomerase that negatively supercoils closed circular double-stranded (ds) DNA in an ATP-dependent manner to modulate DNA topology and maintain chromosomes in an underwound state. Negative supercoiling favors strand separation, and DNA replication, transcription, recombination and repair, all of which involve strand separation. Also able to catalyze the interconversion of other topological isomers of dsDNA rings, including catenanes and knotted rings. Type II topoisomerases break and join 2 DNA strands simultaneously in an ATP-dependent manner. The chain is DNA gyrase subunit A from Borrelia hermsii (strain HS1 / DAH).